A 941-amino-acid polypeptide reads, in one-letter code: Peroxisomal ATPase PEX6 (941 aa).

ATP-binding positions include glycine 384–arginine 391 and glycine 698–threonine 705.

This sequence belongs to the AAA ATPase family. Interacts with PEX1; forming the PEX1-PEX6 AAA ATPase complex, which is composed of a heterohexamer formed by a trimer of PEX1-PEX6 dimers. Interacts with APME9.

It localises to the cytoplasm. Its subcellular location is the cytosol. The protein resides in the peroxisome membrane. The catalysed reaction is ATP + H2O = ADP + phosphate + H(+). Component of the PEX1-PEX6 AAA ATPase complex, a protein dislocase complex that mediates the ATP-dependent extraction of the PEX5 receptor from peroxisomal membranes, an essential step for PEX5 recycling. Specifically recognizes PEX5 monoubiquitinated at 'Cys-11', and pulls it out of the peroxisome lumen through the PEX2-PEX10-PEX12 retrotranslocation channel. Extraction by the PEX1-PEX6 AAA ATPase complex is accompanied by unfolding of the TPR repeats and release of bound cargo from PEX5. Required for jasmonate biosynthesis. Necessary for the developmental elimination of obsolete peroxisome matix proteins. This chain is Peroxisomal ATPase PEX6, found in Arabidopsis thaliana (Mouse-ear cress).